Reading from the N-terminus, the 236-residue chain is Phosphoribosylaminoimidazole-succinocarboxamide synthase (236 aa).

The protein belongs to the SAICAR synthetase family.

It catalyses the reaction 5-amino-1-(5-phospho-D-ribosyl)imidazole-4-carboxylate + L-aspartate + ATP = (2S)-2-[5-amino-1-(5-phospho-beta-D-ribosyl)imidazole-4-carboxamido]succinate + ADP + phosphate + 2 H(+). It functions in the pathway purine metabolism; IMP biosynthesis via de novo pathway; 5-amino-1-(5-phospho-D-ribosyl)imidazole-4-carboxamide from 5-amino-1-(5-phospho-D-ribosyl)imidazole-4-carboxylate: step 1/2. In Pseudomonas aeruginosa (strain LESB58), this protein is Phosphoribosylaminoimidazole-succinocarboxamide synthase.